A 221-amino-acid polypeptide reads, in one-letter code: Glutathione S-transferase (221 aa).

M1 carries the N-acetylmethionine modification. A2 carries the N-acetylalanine; in Glutathione S-transferase, N-terminally processed modification. Residues 3 to 82 (GEQNIKYFNI…YIAEKYNLLG (80 aa)) enclose the GST N-terminal domain. Residues Y9, K45, 53–54 (QV), and 66–67 (QT) contribute to the glutathione site. Residues 84-208 (DMKEHAQIIM…PGSKRKPVPD (125 aa)) enclose the GST C-terminal domain.

The protein belongs to the GST superfamily. Alpha family. Homodimer or heterodimer of GSTA1 and GSTA2.

It is found in the cytoplasm. It catalyses the reaction RX + glutathione = an S-substituted glutathione + a halide anion + H(+). The enzyme catalyses prostaglandin A2 + glutathione = prostaglandin A2-S-(R)-glutathione. The catalysed reaction is prostaglandin J2 + glutathione = prostaglandin J2-S-(R)-glutathione. It carries out the reaction (13S)-hydroperoxy-(9Z,11E)-octadecadienoate + 2 glutathione = (13S)-hydroxy-(9Z,11E)-octadecadienoate + glutathione disulfide + H2O. It catalyses the reaction androst-5-ene-3,17-dione = androst-4-ene-3,17-dione. Its function is as follows. Glutathione S-transferase that catalyzes the nucleophilic attack of the sulfur atom of glutathione on the electrophilic groups of a wide range of exogenous and endogenous compounds. Involved in the formation of glutathione conjugates of both prostaglandin A2 (PGA2) and prostaglandin J2 (PGJ2). It also catalyzes the isomerization of D5-androstene-3,17-dione (AD) into D4-androstene-3,17-dione and may therefore play an important role in hormone biosynthesis. Through its glutathione-dependent peroxidase activity toward the fatty acid hydroperoxide (13S)-hydroperoxy-(9Z,11E)-octadecadienoate/13-HPODE it is also involved in the metabolism of oxidized linoleic acid. The polypeptide is Glutathione S-transferase (Antechinus stuartii (Brown marsupial mouse)).